We begin with the raw amino-acid sequence, 211 residues long: Holliday junction branch migration complex subunit RuvA (211 aa).

A domain I region spans residues 1–64; sequence MIGRLRGMLV…EDAQLLYGFA (64 aa). Residues 65-143 are domain II; sequence NKVERKLFRL…DWQAQQIHLV (79 aa). The tract at residues 144-162 is flexible linker; the sequence is SDDGVIPEQLSAELSQETT. Residues 163–211 form a domain III region; sequence FVNDNKGDAINALLSLGYKQVQADKAVKSVYNRGMSSENIIRDALKSMI.

It belongs to the RuvA family. In terms of assembly, homotetramer. Forms an RuvA(8)-RuvB(12)-Holliday junction (HJ) complex. HJ DNA is sandwiched between 2 RuvA tetramers; dsDNA enters through RuvA and exits via RuvB. An RuvB hexamer assembles on each DNA strand where it exits the tetramer. Each RuvB hexamer is contacted by two RuvA subunits (via domain III) on 2 adjacent RuvB subunits; this complex drives branch migration. In the full resolvosome a probable DNA-RuvA(4)-RuvB(12)-RuvC(2) complex forms which resolves the HJ.

Its subcellular location is the cytoplasm. In terms of biological role, the RuvA-RuvB-RuvC complex processes Holliday junction (HJ) DNA during genetic recombination and DNA repair, while the RuvA-RuvB complex plays an important role in the rescue of blocked DNA replication forks via replication fork reversal (RFR). RuvA specifically binds to HJ cruciform DNA, conferring on it an open structure. The RuvB hexamer acts as an ATP-dependent pump, pulling dsDNA into and through the RuvAB complex. HJ branch migration allows RuvC to scan DNA until it finds its consensus sequence, where it cleaves and resolves the cruciform DNA. This chain is Holliday junction branch migration complex subunit RuvA, found in Colwellia psychrerythraea (strain 34H / ATCC BAA-681) (Vibrio psychroerythus).